The following is a 276-amino-acid chain: Bis(5'-nucleosyl)-tetraphosphatase, symmetrical (276 aa).

The protein belongs to the Ap4A hydrolase family.

It catalyses the reaction P(1),P(4)-bis(5'-adenosyl) tetraphosphate + H2O = 2 ADP + 2 H(+). Its function is as follows. Hydrolyzes diadenosine 5',5'''-P1,P4-tetraphosphate to yield ADP. The protein is Bis(5'-nucleosyl)-tetraphosphatase, symmetrical of Tolumonas auensis (strain DSM 9187 / NBRC 110442 / TA 4).